Consider the following 247-residue polypeptide: Ubiquinone biosynthesis O-methyltransferase (247 aa).

4 residues coordinate S-adenosyl-L-methionine: arginine 45, glycine 65, aspartate 86, and leucine 130.

Belongs to the methyltransferase superfamily. UbiG/COQ3 family.

It catalyses the reaction a 3-demethylubiquinol + S-adenosyl-L-methionine = a ubiquinol + S-adenosyl-L-homocysteine + H(+). The catalysed reaction is a 3-(all-trans-polyprenyl)benzene-1,2-diol + S-adenosyl-L-methionine = a 2-methoxy-6-(all-trans-polyprenyl)phenol + S-adenosyl-L-homocysteine + H(+). It participates in cofactor biosynthesis; ubiquinone biosynthesis. In terms of biological role, O-methyltransferase that catalyzes the 2 O-methylation steps in the ubiquinone biosynthetic pathway. This is Ubiquinone biosynthesis O-methyltransferase from Alkalilimnicola ehrlichii (strain ATCC BAA-1101 / DSM 17681 / MLHE-1).